Consider the following 1040-residue polypeptide: Multidrug resistance protein MdtB (1040 aa).

11 consecutive transmembrane segments (helical) span residues 15–37, 343–365, 369–391, 398–420, 440–462, 474–496, 535–557, 867–889, 909–931, 968–990, and 1000–1022; these read LFIL…GIIG, VQFE…LRNA, LIPS…FLGF, LMAL…ENIA, IGFT…LFMG, VTLA…MMCA, HPWL…YIWI, VWLI…ESFI, LMMA…IGIV, ILMT…GVGA, and MVGG…YLLF.

The protein belongs to the resistance-nodulation-cell division (RND) (TC 2.A.6) family. MdtB subfamily. In terms of assembly, part of a tripartite efflux system composed of MdtA, MdtB and MdtC. MdtB forms a heteromultimer with MdtC.

The protein localises to the cell inner membrane. This is Multidrug resistance protein MdtB from Pectobacterium atrosepticum (strain SCRI 1043 / ATCC BAA-672) (Erwinia carotovora subsp. atroseptica).